The primary structure comprises 656 residues: Anion exchange transporter (656 aa).

At 1 to 75 (MTGAKRKKRS…LSFAMLSSVH (75 aa)) the chain is on the cytoplasmic side. Residues 76–96 (PVFGLYGSLFPAIIYAIFGMG) form a helical membrane-spanning segment. Topologically, residues 97-144 (RHVATGTFALTSLISANAVERLVPQSSRNLTTQSNSSVLGLSEFELQR) are extracellular. The chain crosses the membrane as a helical span at residues 145–165 (IGVAAAVSFLGGVIQLVMFVL). A topological domain (cytoplasmic) is located at residue Gln-166. A helical membrane pass occupies residues 167–187 (LGSATFLLTEPVISAMTTGAA). Over 188-199 (THVVTSQVKYLL) the chain is Extracellular. Residues 200 to 220 (GIKMPYISGPLGFFYIYAYVF) form a helical membrane-spanning segment. The Cytoplasmic segment spans residues 221–222 (EN). A helical transmembrane segment spans residues 223-243 (IKSVQLEALLFSLLSIIVLVL). Residues 244 to 254 (VKELNEQFKRK) lie on the Extracellular side of the membrane. The chain crosses the membrane as a helical span at residues 255–275 (IKVVLPVDLVLIIAASFACYC). Topologically, residues 276 to 306 (TNMENTYGLEVVGHIPNGIPPPRAPPMNILS) are cytoplasmic. Residues 307–327 (AVLTEAFGVALVGYVASLALA) form a helical membrane-spanning segment. Residues 328–343 (QGSAKKFKYSVDDNQE) lie on the Extracellular side of the membrane. Residues 344–364 (FLAHGLSNVIPSFLFCIPSAA) traverse the membrane as a helical segment. Topologically, residues 365–383 (AMGRTAGLYSTGAKTQVAC) are cytoplasmic. Helical transmembrane passes span 384–404 (LISC…LYWL) and 405–425 (PMCV…IQFR). Residues 426 to 448 (DLKKYWNVDKIDWGIWISTYIFT) lie on the Extracellular side of the membrane. A helical membrane pass occupies residues 449–469 (ICFAANVGLLFGVICTIAIVL). Residues 470–656 (GRFPRAKTLS…LSKASDHSEV (187 aa)) are Cytoplasmic-facing. Residues 492-641 (TEMHDETSQQ…DSVPAAISII (150 aa)) form the STAS domain. The interval 641–656 (IQSNKNLSKASDHSEV) is membrane targeting.

This sequence belongs to the SLC26A/SulP transporter (TC 2.A.53) family. As to expression, expressed in the Reissner's membrane epithelial cells in the cochlea (at protein level). Expressed in the retinal pigment epithelium (at protein level). Abundantly expressed in parietal cells on the glandular portion of the stomach. Lower levels are observed in the kidney, with expression in the proximal tubule and thick ascending limb of the loop of Henle. Also expressed in distal segments of nephron, in extraglomerular mesagial cells and a subpopulation of intercalated cells of outer medullary collecting ducts. Expressed in the thyroid gland.

The protein localises to the basolateral cell membrane. Its subcellular location is the recycling endosome membrane. It is found in the apical cell membrane. It localises to the lateral cell membrane. The catalysed reaction is chloride(in) = chloride(out). It catalyses the reaction iodide(out) = iodide(in). It carries out the reaction bromide(in) = bromide(out). The enzyme catalyses oxalate(in) = oxalate(out). The catalysed reaction is nitrate(in) = nitrate(out). It catalyses the reaction sulfate(in) = sulfate(out). It carries out the reaction hydrogencarbonate(in) = hydrogencarbonate(out). The enzyme catalyses D-gluconate(in) = D-gluconate(out). The catalysed reaction is thiocyanate(in) = thiocyanate(out). It catalyses the reaction hydrogencarbonate(in) + chloride(out) = hydrogencarbonate(out) + chloride(in). Its activity is regulated as follows. Regulated by pH. Activity inhibited by all inhibitors of several anion channels and transporters, including 4,4'-Di-isothiocyanatostilbene-2,2'-disulfonic acid (DIDS), diphenylamine-2-carboxylic acid, glybenclamide and 5-Nitro-2-(3-phenylpropyl-amino)benzoic acid. Functionally, acts as an anion channel mediating the transport of chloride, bromide, iodide, nitrate, sulfate, gluconate, thiocyanate and bicarbonate ions. Its permeability towards bicarbonate is weak and increases when pH is above 7. Mediates oxalate transport. Mediates thiocyanate transport in retinal pigment epithelium cells. Mediates iodide transport in the thyroid gland, playing an important role in the synthesis of thyroid hormones and the maintenance of thyroid function. Although it is an anion channel, according to PubMed:12736153 and PubMed:19723628 it has been shown to exhibit chloride-bicarbonate exchanger activity. In Mus musculus (Mouse), this protein is Anion exchange transporter.